Consider the following 152-residue polypeptide: Xanthine-guanine phosphoribosyltransferase (152 aa).

5-phospho-alpha-D-ribose 1-diphosphate is bound by residues 37-38, Arg-69, and 88-96; these read RG and DDLVDSGDT. Position 69 (Arg-69) interacts with GMP. Position 89 (Asp-89) interacts with Mg(2+). Guanine is bound by residues Asp-92 and Ile-135. Residues Asp-92 and Ile-135 each contribute to the xanthine site. Residues 92 to 96 and 134 to 135 contribute to the GMP site; these read DSGDT and WI.

It belongs to the purine/pyrimidine phosphoribosyltransferase family. XGPT subfamily. Homotetramer. The cofactor is Mg(2+).

The protein localises to the cell inner membrane. It carries out the reaction GMP + diphosphate = guanine + 5-phospho-alpha-D-ribose 1-diphosphate. It catalyses the reaction XMP + diphosphate = xanthine + 5-phospho-alpha-D-ribose 1-diphosphate. The catalysed reaction is IMP + diphosphate = hypoxanthine + 5-phospho-alpha-D-ribose 1-diphosphate. It functions in the pathway purine metabolism; GMP biosynthesis via salvage pathway; GMP from guanine: step 1/1. It participates in purine metabolism; XMP biosynthesis via salvage pathway; XMP from xanthine: step 1/1. Functionally, purine salvage pathway enzyme that catalyzes the transfer of the ribosyl-5-phosphate group from 5-phospho-alpha-D-ribose 1-diphosphate (PRPP) to the N9 position of the 6-oxopurines guanine and xanthine to form the corresponding ribonucleotides GMP (guanosine 5'-monophosphate) and XMP (xanthosine 5'-monophosphate), with the release of PPi. To a lesser extent, also acts on hypoxanthine. The sequence is that of Xanthine-guanine phosphoribosyltransferase from Aliivibrio fischeri (strain ATCC 700601 / ES114) (Vibrio fischeri).